Consider the following 85-residue polypeptide: UPF0386 protein RHE_CH01859 (85 aa).

It belongs to the UPF0386 family.

This chain is UPF0386 protein RHE_CH01859, found in Rhizobium etli (strain ATCC 51251 / DSM 11541 / JCM 21823 / NBRC 15573 / CFN 42).